The sequence spans 103 residues: MSVCKGVSGNPAKGEVFLYKHVNFQGDSWKVTGNVYDFRSVSGLNDVVSSVKVGPNTKAFIFKDDRFNGNFIRLEESSQVTDLTTRNLNDAISSIIVATFESA.

The segment at 1–13 (MSVCKGVSGNPAK) is N-terminal arm. 2 consecutive Beta/gamma crystallin 'Greek key' domains span residues 14–55 (GEVF…KVGP) and 57–99 (TKAF…IVAT).

The protein belongs to the beta/gamma-crystallin family.

The protein resides in the cytoplasm. In terms of biological role, structural protein. This Physarum polycephalum (Slime mold) protein is Spherulin-3A.